Consider the following 317-residue polypeptide: Ornithine carbamoyltransferase (317 aa).

Carbamoyl phosphate is bound by residues 54–57 (STRT), Gln81, Arg105, and 132–135 (HPCQ). L-ornithine is bound by residues Asn163, Asp227, and 231-232 (SM). Residues 267–268 (CL) and Arg295 contribute to the carbamoyl phosphate site.

It belongs to the aspartate/ornithine carbamoyltransferase superfamily. OTCase family.

The protein localises to the cytoplasm. It carries out the reaction carbamoyl phosphate + L-ornithine = L-citrulline + phosphate + H(+). The protein operates within amino-acid biosynthesis; L-arginine biosynthesis; L-arginine from L-ornithine and carbamoyl phosphate: step 1/3. In terms of biological role, reversibly catalyzes the transfer of the carbamoyl group from carbamoyl phosphate (CP) to the N(epsilon) atom of ornithine (ORN) to produce L-citrulline. This chain is Ornithine carbamoyltransferase, found in Parafrankia sp. (strain EAN1pec).